The chain runs to 343 residues: MVKVKVAINGYGTIGKRVADAIRLQPDMELIGVAKTSPNYEAFTAMRKGYKLYTTKENIQKFQNSGINVAGSIEDMIKDSDIIIDATPGGVGANYKKIYQEYGKKAIFQGGEKSDVADVSFSALCNYNDAINKNYIRVVSCNTTGILRVLCTINNFDKIEKVRGTIVRRAADPKEVKKGPINSIVADPARIPSHHAKDVLTVLKGIDIITSALVAPTTLMHLHTLFITTRNKVSKEDLLNILSNTPRILLLNTEKADAESTAEIMEIARDLGRYRNDVPETVIFEDSIYTNGNEIFLMYGVHQESIVVPENIDAIRASLNIMSRDESIRLTNETLKIGKGYLI.

NAD(+) contacts are provided by residues 13–14 (TI) and glycine 111. A D-glyceraldehyde 3-phosphate-binding site is contributed by 140–142 (SCN). The active-site Nucleophile is cysteine 141. An NAD(+)-binding site is contributed by arginine 169. Position 195-196 (195-196 (HA)) interacts with D-glyceraldehyde 3-phosphate. Glutamine 303 serves as a coordination point for NAD(+).

This sequence belongs to the glyceraldehyde-3-phosphate dehydrogenase family. Homotetramer.

It is found in the cytoplasm. The catalysed reaction is D-glyceraldehyde 3-phosphate + phosphate + NADP(+) = (2R)-3-phospho-glyceroyl phosphate + NADPH + H(+). It carries out the reaction D-glyceraldehyde 3-phosphate + phosphate + NAD(+) = (2R)-3-phospho-glyceroyl phosphate + NADH + H(+). Its pathway is carbohydrate degradation; glycolysis; pyruvate from D-glyceraldehyde 3-phosphate: step 1/5. This chain is Glyceraldehyde-3-phosphate dehydrogenase, found in Sulfolobus acidocaldarius (strain ATCC 33909 / DSM 639 / JCM 8929 / NBRC 15157 / NCIMB 11770).